The sequence spans 226 residues: Phosphoglycolate phosphatase (226 aa).

Asp12 acts as the Nucleophile in catalysis. Positions 12, 14, and 177 each coordinate Mg(2+).

This sequence belongs to the HAD-like hydrolase superfamily. CbbY/CbbZ/Gph/YieH family. Mg(2+) serves as cofactor.

The catalysed reaction is 2-phosphoglycolate + H2O = glycolate + phosphate. Its pathway is organic acid metabolism; glycolate biosynthesis; glycolate from 2-phosphoglycolate: step 1/1. In terms of biological role, specifically catalyzes the dephosphorylation of 2-phosphoglycolate. Is involved in the dissimilation of the intracellular 2-phosphoglycolate formed during the DNA repair of 3'-phosphoglycolate ends, a major class of DNA lesions induced by oxidative stress. The polypeptide is Phosphoglycolate phosphatase (Colwellia psychrerythraea (strain 34H / ATCC BAA-681) (Vibrio psychroerythus)).